The sequence spans 309 residues: MTDRVIRIGTRGSMLALKQSGNVKAAMEALWPGLRVELQVVRTTGDKILDVPLAKVGGKGLFVKEIEDALLARTVDLAVHSMKDVPAILPEGLEIGAIPKREDPRDVIVTRTGKGIADLPMGGRVGTSSLRRASQIRKLRPDIEIANLRGNIETRLRKLTEGAFDAIILAAAGLHRMGWQNRVTSYLDPADFLPAIGQGAIGIELRCDDGEVRELLAPLHDPDTHVAVEAERSLLRTLEGGCQVPIGGHAHLVDGTLTLSGMVASIDGEELFRASRAGSPAQARKIGRDVGMELLDSGARRILEEIYRA.

Position 242 is an S-(dipyrrolylmethanemethyl)cysteine (Cys-242).

The protein belongs to the HMBS family. As to quaternary structure, monomer. Dipyrromethane is required as a cofactor.

The enzyme catalyses 4 porphobilinogen + H2O = hydroxymethylbilane + 4 NH4(+). It participates in porphyrin-containing compound metabolism; protoporphyrin-IX biosynthesis; coproporphyrinogen-III from 5-aminolevulinate: step 2/4. In terms of biological role, tetrapolymerization of the monopyrrole PBG into the hydroxymethylbilane pre-uroporphyrinogen in several discrete steps. This chain is Porphobilinogen deaminase, found in Syntrophobacter fumaroxidans (strain DSM 10017 / MPOB).